A 104-amino-acid chain; its full sequence is Large ribosomal subunit protein uL24 (104 aa).

This sequence belongs to the universal ribosomal protein uL24 family. In terms of assembly, part of the 50S ribosomal subunit.

One of two assembly initiator proteins, it binds directly to the 5'-end of the 23S rRNA, where it nucleates assembly of the 50S subunit. Its function is as follows. One of the proteins that surrounds the polypeptide exit tunnel on the outside of the subunit. The sequence is that of Large ribosomal subunit protein uL24 from Pseudomonas fluorescens (strain SBW25).